The primary structure comprises 465 residues: D(1C) dopamine receptor (465 aa).

The Extracellular portion of the chain corresponds to 1–30 (MENFSIFNVTVNVWHADLDVGNSDLSLRAL). N3 and N8 each carry an N-linked (GlcNAc...) asparagine glycan. The chain crosses the membrane as a helical span at residues 31 to 54 (TGLLLSLLILSTLLGNTLVCLAVI). The Cytoplasmic segment spans residues 55-65 (KFRHLRSKVTN). The chain crosses the membrane as a helical span at residues 66-92 (FFVISLAVSDLFVALLVMPWKAVTEVA). At 93 to 101 (GFWVFGDFC) the chain is on the extracellular side. C101 and C187 are disulfide-bonded. The helical transmembrane segment at 102-124 (DTWVAFDIMCSTASILNLCIISL) threads the bilayer. The Cytoplasmic segment spans residues 125–143 (DRYWAIASPFRYERKMTQR). A helical membrane pass occupies residues 144–168 (VAFIMIGVAWTLSILISFIPVQLSW). At 169–193 (HKSHEADEELNGVNHTENCDSSLNR) the chain is on the extracellular side. Residues 194 to 219 (TYAISSSLISFYIPVVIMIGTYTRIY) traverse the membrane as a helical segment. The Cytoplasmic segment spans residues 220-264 (RIAQTQIRRISSLERAVEHAQRCSSRLSNENSLKTSFRKETKVLK). A helical membrane pass occupies residues 265–291 (TLSIIMGVFVFCWLPFFVLNCMIPFCH). The Extracellular segment spans residues 292–309 (MNLPGQNEPEPPCVSETT). A helical transmembrane segment spans residues 310 to 334 (FNIFVWFGWANSSLNPVIYAFNADF). Residues 335–465 (RKAFTTILGC…EDRHYTTKLY (131 aa)) are Cytoplasmic-facing. C344 carries S-palmitoyl cysteine lipidation.

It belongs to the G-protein coupled receptor 1 family. Brain and kidney.

The protein localises to the cell membrane. The protein resides in the cell projection. It localises to the cilium membrane. In terms of biological role, this is one of the five types (D1 to D5) of receptors for dopamine. The activity of this receptor is mediated by G proteins which activate adenylyl cyclase. This is D(1C) dopamine receptor (drd1c) from Xenopus laevis (African clawed frog).